Here is a 453-residue protein sequence, read N- to C-terminus: Mitochondrial import inner membrane translocase subunit TIM44 (453 aa).

Residue threonine 129 is modified to Phosphothreonine. 167–174 (GGEKLGKT) is a binding site for ATP. At lysine 178 the chain carries N6-succinyllysine. Phosphoserine is present on serine 181. Lysine 218 carries the N6-succinyllysine modification.

It belongs to the Tim44 family. As to quaternary structure, probable component of the PAM complex at least composed of a mitochondrial HSP70 protein, GRPEL1 or GRPEL2, TIMM44, TIMM16/PAM16 and TIMM14/DNAJC19. The complex interacts with the TIMM23 component of the TIM23 complex. Interacts with SLC25A4/ANT1 and SLC25A5/ANT2; leading to inhibit the presequence translocase TIMM23, thereby promoting stabilization of PINK1.

The protein resides in the mitochondrion inner membrane. It is found in the mitochondrion matrix. Essential component of the PAM complex, a complex required for the translocation of transit peptide-containing proteins from the inner membrane into the mitochondrial matrix in an ATP-dependent manner. Recruits mitochondrial HSP70 to drive protein translocation into the matrix using ATP as an energy source. This Rattus norvegicus (Rat) protein is Mitochondrial import inner membrane translocase subunit TIM44 (Timm44).